A 514-amino-acid chain; its full sequence is Glutamate--cysteine ligase (514 aa).

The protein belongs to the glutamate--cysteine ligase type 1 family. Type 1 subfamily.

It carries out the reaction L-cysteine + L-glutamate + ATP = gamma-L-glutamyl-L-cysteine + ADP + phosphate + H(+). It functions in the pathway sulfur metabolism; glutathione biosynthesis; glutathione from L-cysteine and L-glutamate: step 1/2. This is Glutamate--cysteine ligase from Enterobacter sp. (strain 638).